The primary structure comprises 238 residues: MNKAILAVAMVLLLAGCATKPEEIGRAPDLSPVAAHLGMQNNPQFNGYPARPGKASYSLWDQRSTNFFKDPRAATPGDVLTVIISINDRANLDNKTDRERVSKGIYGGGGSFATSSITGAAAGGDMDASVNTHSDSKSKGKGTIERSEDIRLQIAAIVTDTLPNGNLIIRGSQEVRVNNELRVLNVAGVVRPRDISGNNTISYDKIAEARISYGGRGRLSEIQQPPYGQQILDQFSPF.

Residues 1 to 16 form the signal peptide; the sequence is MNKAILAVAMVLLLAG. C17 carries N-palmitoyl cysteine lipidation. C17 is lipidated: S-diacylglycerol cysteine.

Belongs to the FlgH family. As to quaternary structure, the basal body constitutes a major portion of the flagellar organelle and consists of four rings (L,P,S, and M) mounted on a central rod.

It is found in the cell outer membrane. The protein localises to the bacterial flagellum basal body. In terms of biological role, assembles around the rod to form the L-ring and probably protects the motor/basal body from shearing forces during rotation. This is Flagellar L-ring protein from Brucella abortus (strain 2308).